We begin with the raw amino-acid sequence, 84 residues long: Mu-conotoxin-like Cal 12.2a (84 aa).

A signal peptide spans 1–19 (MKLTCVLVVLLLVLPFGDL). The propeptide occupies 20–42 (ITTSNTEDNKRGATPWQNSLKAR). Intrachain disulfides connect Cys45/Cys57, Cys52/Cys65, Cys59/Cys70, and Cys64/Cys76. Residue Pro48 is modified to 4-hydroxyproline. 6'-bromotryptophan is present on Trp72. Pro77 is modified (4-hydroxyproline). Trp81 is subject to 6'-bromotryptophan.

The protein belongs to the conotoxin O1 superfamily. As to expression, expressed by the venom duct.

It is found in the secreted. Functionally, mu-conotoxins block voltage-gated sodium channels. This toxin reversibly blocks voltage-gated sodium channel in cephalopods, with no alteration in the voltage dependence of sodium conductance or on the kinetics of inactivation. This Californiconus californicus (California cone) protein is Mu-conotoxin-like Cal 12.2a.